A 312-amino-acid chain; its full sequence is Olfactory receptor 51I2 (312 aa).

Topologically, residues 1–25 (MGLFNVTHPAFFLLTGIPGLESSHS) are extracellular. Residue Asn5 is glycosylated (N-linked (GlcNAc...) asparagine). The helical transmembrane segment at 26-46 (WLSGPLCVMYAVALGGNTVIL) threads the bilayer. Residues 47 to 54 (QAVRVEPS) are Cytoplasmic-facing. A helical transmembrane segment spans residues 55 to 75 (LHEPMYYFLSMLSFSDVAISM). Residues 76-99 (ATLPTVLRTFCLNARNITFDACLI) lie on the Extracellular side of the membrane. A disulfide bond links Cys97 and Cys189. The chain crosses the membrane as a helical span at residues 100 to 120 (QMFLIHFFSMMESGILLAMSF). Topologically, residues 121 to 139 (DRYVAICDPLRYATVLTTE) are cytoplasmic. Residues 140 to 160 (VIAAMGLGAAARSFITLFPLP) form a helical membrane-spanning segment. At 161-196 (FLIKRLPICRSNVLSHSYCLHPDMMRLACADISINS) the chain is on the extracellular side. The chain crosses the membrane as a helical span at residues 197 to 217 (IYGLFVLVSTFGMDLFFIFLS). The Cytoplasmic segment spans residues 218-237 (YVLILRSVMATASREERLKA). Residues 238-258 (LNTCVSHILAVLAFYVPMIGV) traverse the membrane as a helical segment. Topologically, residues 259 to 273 (STVHRFGKHVPCYIH) are extracellular. A helical membrane pass occupies residues 274–294 (VLMSNVYLFVPPVLNPLIYSA). At 295-312 (KTKEIRRAIFRMFHHIKI) the chain is on the cytoplasmic side.

Belongs to the G-protein coupled receptor 1 family.

It localises to the cell membrane. In terms of biological role, odorant receptor. The sequence is that of Olfactory receptor 51I2 (OR51I2) from Homo sapiens (Human).